Here is a 400-residue protein sequence, read N- to C-terminus: Transposase for insertion sequence element ISRM3 (400 aa).

It belongs to the transposase mutator family.

Its function is as follows. Required for the transposition of the insertion element. The protein is Transposase for insertion sequence element ISRM3 of Rhizobium meliloti (strain 1021) (Ensifer meliloti).